Here is a 99-residue protein sequence, read N- to C-terminus: Protein MOST-1 (99 aa).

As to quaternary structure, interacts with TSPO, IGHM and IGHD. In terms of tissue distribution, expressed in the heart, kidney, liver, pancreas, small intestine, ovary, testis, prostate and thymus. Expressed in all of the cancer cell lines tested.

The protein resides in the cytoplasm. It is found in the microsome membrane. It localises to the endoplasmic reticulum membrane. In terms of biological role, may be involved in cell survival, proliferation and progression of cancer cells. The protein is Protein MOST-1 (C8orf17) of Homo sapiens (Human).